Reading from the N-terminus, the 1132-residue chain is DNA-directed RNA polymerase I subunit RPA2 (1132 aa).

The C4-type zinc finger occupies 1067 to 1098 (CMDCGSLLSPLLEKPPPNWSATRHRKTICLLC).

The protein belongs to the RNA polymerase beta chain family. Component of the RNA polymerase I (Pol I) complex consisting of at least 13 subunits.

It is found in the nucleus. Its subcellular location is the nucleolus. The protein resides in the chromosome. It carries out the reaction RNA(n) + a ribonucleoside 5'-triphosphate = RNA(n+1) + diphosphate. Functionally, DNA-dependent RNA polymerase catalyzes the transcription of DNA into RNA using the four ribonucleoside triphosphates as substrates. Second largest core component of RNA polymerase I which synthesizes ribosomal RNA precursors. Proposed to contribute to the polymerase catalytic activity and forms the polymerase active center together with the largest subunit. Pol I is composed of mobile elements and RPA2 is part of the core element with the central large cleft and probably a clamp element that moves to open and close the cleft. In Danio rerio (Zebrafish), this protein is DNA-directed RNA polymerase I subunit RPA2 (polr1b).